A 377-amino-acid chain; its full sequence is MSPSNQSAEGLPQEAANRSLNATGTPEAWDPGTLQALKISLAVVLSIITVATVLSNTFVLTTILLTRKLHTPANYLIGSLATTDLLVSILVMPISIAYTITHTWNFGQVLCDIWVSSDITCCTASILHLCVIALDRYWAITDALEYSKRRTAGHAAAMIAVVWAISICISIPPLFWRQAKAHEEVSDCLVNTSQISYTIYSTCGAFYIPSVLLIVLYGRIYMAARNRILNPPSLYGKRFTTAHLITGSAGSSLCSLSPSLGEGHSHSAGSPLFFNPVRIKLADSVLERKRISAARERKATKTLGIILGAFIGCWLPFFVASLVLPICRDSCWMPPGLFDFFTWLGYLNSLINPIIYTVFNEDFRQAFQRVIHFRKAF.

Asn5, Asn17, and Asn21 each carry an N-linked (GlcNAc...) asparagine glycan. The next 3 helical transmembrane spans lie at 39 to 64 (ISLAVVLSIITVATVLSNTFVLTTIL), 76 to 97 (LIGSLATTDLLVSILVMPISIA), and 110 to 134 (LCDIWVSSDITCCTASILHLCVIAL). Cysteines 111 and 188 form a disulfide. 2 residues coordinate serotonin: Asp118 and Cys122. The DRY motif; important for ligand-induced conformation changes signature appears at 135–137 (DRY). Transmembrane regions (helical) follow at residues 155–176 (AAAMIAVVWAISICISIPPLFW), 195–218 (ISYTIYSTCGAFYIPSVLLIVLYG), 301–326 (KTLGIILGAFIGCWLPFFVASLVLPI), and 336–359 (GLFDFFTWLGYLNSLINPIIYTVF). Position 321 (Ser321) interacts with serotonin. Positions 352-356 (NPIIY) match the NPxxY motif; important for ligand-induced conformation changes and signaling motif.

Belongs to the G-protein coupled receptor 1 family. As to quaternary structure, homodimer. Heterodimer with HTR1B.

It is found in the cell membrane. In terms of biological role, G-protein coupled receptor for 5-hydroxytryptamine (serotonin). Also functions as a receptor for ergot alkaloid derivatives, various anxiolytic and antidepressant drugs and other psychoactive substances. Ligand binding causes a conformation change that triggers signaling via guanine nucleotide-binding proteins (G proteins) and modulates the activity of downstream effectors, such as adenylate cyclase. HTR1D is coupled to G(i)/G(o) G alpha proteins and mediates inhibitory neurotransmission by inhibiting adenylate cyclase activity. Regulates the release of 5-hydroxytryptamine in the brain, and thereby affects neural activity. May also play a role in regulating the release of other neurotransmitters. May play a role in vasoconstriction. The sequence is that of 5-hydroxytryptamine receptor 1D (HTR1D) from Oryctolagus cuniculus (Rabbit).